The chain runs to 356 residues: Phospho-N-acetylmuramoyl-pentapeptide-transferase (356 aa).

10 consecutive transmembrane segments (helical) span residues 27–47 (ATLM…INML), 73–93 (TMGG…WMDL), 97–117 (FVWA…LDDL), 138–158 (FLVA…WLYV), 165–185 (AIPL…GAGN), 195–215 (GLAI…AYLA), 232–252 (AGEL…FLWF), 258–278 (AVFM…AIAV), 284–304 (IVLA…IIQV), and 333–353 (KVVI…LATL).

This sequence belongs to the glycosyltransferase 4 family. MraY subfamily. Mg(2+) is required as a cofactor.

It is found in the cell inner membrane. The enzyme catalyses UDP-N-acetyl-alpha-D-muramoyl-L-alanyl-gamma-D-glutamyl-meso-2,6-diaminopimeloyl-D-alanyl-D-alanine + di-trans,octa-cis-undecaprenyl phosphate = di-trans,octa-cis-undecaprenyl diphospho-N-acetyl-alpha-D-muramoyl-L-alanyl-D-glutamyl-meso-2,6-diaminopimeloyl-D-alanyl-D-alanine + UMP. It participates in cell wall biogenesis; peptidoglycan biosynthesis. Catalyzes the initial step of the lipid cycle reactions in the biosynthesis of the cell wall peptidoglycan: transfers peptidoglycan precursor phospho-MurNAc-pentapeptide from UDP-MurNAc-pentapeptide onto the lipid carrier undecaprenyl phosphate, yielding undecaprenyl-pyrophosphoryl-MurNAc-pentapeptide, known as lipid I. In Erythrobacter litoralis (strain HTCC2594), this protein is Phospho-N-acetylmuramoyl-pentapeptide-transferase.